The sequence spans 372 residues: Ciliary neurotrophic factor receptor subunit alpha (372 aa).

The N-terminal stretch at 1–22 (MAAPVPWACCAVLAAAAAVVYA) is a signal peptide. The Ig-like C2-type domain maps to 27 to 104 (PQEAPHVQYE…WHLRHQVLLH (78 aa)). A disulfide bond links cysteine 46 and cysteine 89. N-linked (GlcNAc...) asparagine glycans are attached at residues asparagine 60, asparagine 70, asparagine 142, and asparagine 190. Fibronectin type-III domains lie at 108-205 (PPRE…VKPD) and 206-306 (PPEN…TEEP). A WSXWS motif motif is present at residues 290-294 (WSDWS). The interval 301-340 (PWTEEPRHLTTEAQAPETTTSTTSSLAPPPTTKICDPGEL) is disordered. Residues 311 to 326 (TEAQAPETTTSTTSSL) show a composition bias toward low complexity. A lipid anchor (GPI-anchor amidated serine) is attached at serine 342. Positions 343–372 (GGGPSAPFLIHVPVTLALAAAAATANSLLI) are cleaved as a propeptide — removed in mature form.

Belongs to the type I cytokine receptor family. Type 3 subfamily. In terms of assembly, forms a heterotrimer with LIFR and IL6ST. Interacts with heterodimeric neurotropic cytokine composed of CLCF1/CLC and CRLF1/CLF-1. Either alone or in complex with the heterodimer CLCF1-CRLF1 interacts with SORL1; this interaction may promote internalization and lysosomal degradation. In terms of tissue distribution, expressed in retina, brain, spleen, lung, liver and kidney. In the retina it is highly expressed by photoreceptors, but also found in the RPE, inner nuclear layer and ganglion cells.

It localises to the cell membrane. In terms of biological role, binds to CNTF. The alpha subunit provides the receptor specificity. In Canis lupus familiaris (Dog), this protein is Ciliary neurotrophic factor receptor subunit alpha (CNTFR).